The chain runs to 142 residues: Hemoglobin subunit alpha (142 aa).

A Globin domain is found at 2-142 (VLSAADKNNV…VSTVLTSKYR (141 aa)). Phosphoserine is present on Ser4. Lys8 and Lys12 each carry N6-succinyllysine. N6-acetyllysine; alternate is present on Lys17. An N6-succinyllysine; alternate modification is found at Lys17. At Tyr25 the chain carries Phosphotyrosine. Ser36 carries the phosphoserine modification. Lys41 is subject to N6-succinyllysine. Phosphoserine is present on Ser50. An O2-binding site is contributed by His59. His88 is a heme b binding site. Phosphothreonine is present on Thr109. Ser125 and Ser132 each carry phosphoserine. A phosphothreonine mark is found at Thr135 and Thr138. At Ser139 the chain carries Phosphoserine.

Belongs to the globin family. Heterotetramer of two alpha chains and two beta chains. Red blood cells.

Involved in oxygen transport from the lung to the various peripheral tissues. Its function is as follows. Hemopressin acts as an antagonist peptide of the cannabinoid receptor CNR1. Hemopressin-binding efficiently blocks cannabinoid receptor CNR1 and subsequent signaling. The chain is Hemoglobin subunit alpha (HBA) from Cavia porcellus (Guinea pig).